A 338-amino-acid polypeptide reads, in one-letter code: Outer membrane transporter protein TsaT (338 aa).

Residues 1 to 22 (MNFRRRLCTAALIAALPLASQA) form the signal peptide.

As to quaternary structure, part of a two-component transport system composed of TsaT and TsaS.

The protein resides in the cell outer membrane. Functionally, involved in the uptake of p-toluenesulphonate (TSA). Forms a large, general diffusion pore with a preference for anions. This is Outer membrane transporter protein TsaT (tsaT) from Comamonas testosteroni (Pseudomonas testosteroni).